The chain runs to 210 residues: MMTNFKFALKNLKVNFTSENIDKLRFYIEKVLLFSDRFNLVSNNVRNFDAMLLHALDSVSGLPIVKDKNLRQVLDVGSGAGFPGIVLALFDRCRKYVLLERSNKKAIFLKMISLELGLENVEVLEHNVEEEQNKYEFITIRAFGDIRKYANILGSILKSGGLIMAYKGKFDKVEFEMSYVKNLFDKVEIKSSEVISDKERYFLLLYDYKC.

S-adenosyl-L-methionine-binding positions include Gly77, Phe82, 100-102 (ERS), 128-129 (VE), and Arg141.

The protein belongs to the methyltransferase superfamily. RNA methyltransferase RsmG family.

The protein localises to the cytoplasm. Functionally, specifically methylates the N7 position of a guanine in 16S rRNA. This is Ribosomal RNA small subunit methyltransferase G from Borrelia recurrentis (strain A1).